The following is a 20-amino-acid chain: Sperm acrosome membrane-associated protein 3, processed form (20 aa).

Belongs to the glycosyl hydrolase 22 family.

In terms of biological role, sperm surface membrane protein that may be involved in sperm-egg plasma membrane adhesion and fusion during fertilization. It could be a potential receptor for the egg oligosaccharide residue N-acetylglucosamine, which is present in the extracellular matrix over the egg plasma membrane. The sequence is that of Sperm acrosome membrane-associated protein 3, processed form (SPACA3) from Vulpes vulpes (Red fox).